The sequence spans 190 residues: Carbonic anhydrase 2 (190 aa).

It belongs to the beta-class carbonic anhydrase family. In terms of assembly, homohexamer.

The protein localises to the cytoplasm. It carries out the reaction hydrogencarbonate + H(+) = CO2 + H2O. In terms of biological role, reversible hydration of carbon dioxide. The protein is Carbonic anhydrase 2 of Flaveria linearis (Narrowleaf yellowtops).